Reading from the N-terminus, the 492-residue chain is 3-octaprenyl-4-hydroxybenzoate carboxy-lyase (492 aa).

Asparagine 175 is a Mn(2+) binding site. Prenylated FMN contacts are provided by residues 178-180 (IYR), 192-194 (RWL), and 197-198 (RG). Residue glutamate 241 participates in Mn(2+) binding. The active-site Proton donor is aspartate 290.

It belongs to the UbiD family. Homohexamer. It depends on prenylated FMN as a cofactor. Requires Mn(2+) as cofactor.

Its subcellular location is the cell membrane. It catalyses the reaction a 4-hydroxy-3-(all-trans-polyprenyl)benzoate + H(+) = a 2-(all-trans-polyprenyl)phenol + CO2. It participates in cofactor biosynthesis; ubiquinone biosynthesis. Functionally, catalyzes the decarboxylation of 3-octaprenyl-4-hydroxy benzoate to 2-octaprenylphenol, an intermediate step in ubiquinone biosynthesis. The polypeptide is 3-octaprenyl-4-hydroxybenzoate carboxy-lyase (Salmonella choleraesuis (strain SC-B67)).